Consider the following 412-residue polypeptide: Mitochondrial distribution and morphology protein 12 (412 aa).

In terms of domain architecture, SMP-LTD spans 1-410; sequence MSIDLEWAKL…FPNFHTLVMG (410 aa). 4 disordered regions span residues 66–96, 108–136, 166–238, and 314–354; these read EDDE…DGYE, YTEG…SPTD, QGSG…QQEN, and PAGD…KPLP. Residues 220 to 238 show a composition bias toward low complexity; the sequence is NQPVFPSQQPQQQQPQQEN.

Belongs to the MDM12 family. In terms of assembly, component of the ER-mitochondria encounter structure (ERMES) or MDM complex, composed of MMM1, MDM10, MDM12 and MDM34. An MMM1 homodimer associates with one molecule of MDM12 on each side in a pairwise head-to-tail manner, and the SMP-LTD domains of MMM1 and MDM12 generate a continuous hydrophobic tunnel for phospholipid trafficking.

The protein resides in the mitochondrion outer membrane. Its subcellular location is the endoplasmic reticulum membrane. In terms of biological role, component of the ERMES/MDM complex, which serves as a molecular tether to connect the endoplasmic reticulum (ER) and mitochondria. Components of this complex are involved in the control of mitochondrial shape and protein biogenesis, and function in nonvesicular lipid trafficking between the ER and mitochondria. MDM12 is required for the interaction of the ER-resident membrane protein MMM1 and the outer mitochondrial membrane-resident beta-barrel protein MDM10. The MDM12-MMM1 subcomplex functions in the major beta-barrel assembly pathway that is responsible for biogenesis of all mitochondrial outer membrane beta-barrel proteins, and acts in a late step after the SAM complex. The MDM10-MDM12-MMM1 subcomplex further acts in the TOM40-specific pathway after the action of the MDM12-MMM1 complex. Essential for establishing and maintaining the structure of mitochondria and maintenance of mtDNA nucleoids. In Coprinopsis cinerea (strain Okayama-7 / 130 / ATCC MYA-4618 / FGSC 9003) (Inky cap fungus), this protein is Mitochondrial distribution and morphology protein 12.